Here is a 188-residue protein sequence, read N- to C-terminus: Elongation factor P (188 aa).

This sequence belongs to the elongation factor P family.

The protein localises to the cytoplasm. The protein operates within protein biosynthesis; polypeptide chain elongation. Involved in peptide bond synthesis. Stimulates efficient translation and peptide-bond synthesis on native or reconstituted 70S ribosomes in vitro. Probably functions indirectly by altering the affinity of the ribosome for aminoacyl-tRNA, thus increasing their reactivity as acceptors for peptidyl transferase. This Wolbachia sp. subsp. Drosophila simulans (strain wRi) protein is Elongation factor P.